An 82-amino-acid polypeptide reads, in one-letter code: Small ribosomal subunit protein bS16 (82 aa).

Belongs to the bacterial ribosomal protein bS16 family.

The polypeptide is Small ribosomal subunit protein bS16 (Deinococcus deserti (strain DSM 17065 / CIP 109153 / LMG 22923 / VCD115)).